The chain runs to 100 residues: Large ribosomal subunit protein uL23 (100 aa).

This sequence belongs to the universal ribosomal protein uL23 family. Part of the 50S ribosomal subunit. Contacts protein L29, and trigger factor when it is bound to the ribosome.

One of the early assembly proteins it binds 23S rRNA. One of the proteins that surrounds the polypeptide exit tunnel on the outside of the ribosome. Forms the main docking site for trigger factor binding to the ribosome. In Kosmotoga olearia (strain ATCC BAA-1733 / DSM 21960 / TBF 19.5.1), this protein is Large ribosomal subunit protein uL23.